The primary structure comprises 450 residues: ATP-dependent protease ATPase subunit HslU (450 aa).

Residues Val29, 71–76 (GVGKTE), Asp261, Glu328, and Arg400 contribute to the ATP site.

This sequence belongs to the ClpX chaperone family. HslU subfamily. A double ring-shaped homohexamer of HslV is capped on each side by a ring-shaped HslU homohexamer. The assembly of the HslU/HslV complex is dependent on binding of ATP.

It localises to the cytoplasm. Functionally, ATPase subunit of a proteasome-like degradation complex; this subunit has chaperone activity. The binding of ATP and its subsequent hydrolysis by HslU are essential for unfolding of protein substrates subsequently hydrolyzed by HslV. HslU recognizes the N-terminal part of its protein substrates and unfolds these before they are guided to HslV for hydrolysis. The protein is ATP-dependent protease ATPase subunit HslU of Rickettsia canadensis (strain McKiel).